Consider the following 504-residue polypeptide: MQFFSLVSIFLFLSFLFLLRKWKNSNSQSKKLPPGPWKIPILGSMLHMIGGEPHHVLRDLAKKYGPLMHLQLGEISAVVVTSRDMAKEVLKTHDVVFASRPKIVAMDIICYNQSDIAFSPYGDHWRQMRKICVMELLNAKNVRSFSSIRRDEVVRLIDSIRSDSSSGELVNFTQRIIWFASSMTCRSAFGQVLKGQDIFAKKIREVIGLAEGFDVVDIFPTYKFLHVLSGMKRKLLNAHLKVDAIVEDVINEHKKNLAAGKSNGALGGEDLIDVLLRLMNDTSLQFPITNDNIKAVIVDMFAAGTETSSTTTVWAMAEMMKNPSVFTKAQAEVREAFRDKVSFDENDVEELKYLKLVIKETLRLHPPSPLLVPRECREDTDINGYTIPAKTKVMVNVWALGRDPKYWDDAESFKPERFEQCSVDFFGNNFEFLPFGGGRRICPGMSFGLANLYLPLAQLLYHFDWKLPTGIMPRDLDLTELSGITIARKGGLYLNATPYQPSRE.

Residues 2 to 22 (QFFSLVSIFLFLSFLFLLRKW) traverse the membrane as a helical segment. A heme-binding site is contributed by Cys-442.

The protein belongs to the cytochrome P450 family. The cofactor is heme.

Its subcellular location is the membrane. The catalysed reaction is (+)-5-epi-aristolochene + 2 reduced [NADPH--hemoprotein reductase] + 2 O2 = capsidiol + 2 oxidized [NADPH--hemoprotein reductase] + 2 H2O + 2 H(+). Inhibited by ancymidol and ketoconazole. Functionally, involved in the biosynthesis of capsidiol. Catalyzes the successive and independent hydroxylations at the C1 and C3 positions of 5-epiaristolochene. The second hydroxylation step is 8-fold more efficient than the first hydroxylation reaction. Capable of utilizing premnaspirodiene as a substrate. The chain is 5-epiaristolochene 1,3-dihydroxylase (CYP71D20) from Nicotiana tabacum (Common tobacco).